Consider the following 820-residue polypeptide: Disintegrin and metalloproteinase domain-containing protein 29 (820 aa).

An N-terminal signal peptide occupies residues 1-18 (MKMLLLLHCLGVFLSCSG). The propeptide occupies 19–193 (HIQDEHPQYH…TQKQSSYVGW (175 aa)). At 194–674 (WIHFRIVEIV…GPPPKRKKKK (481 aa)) the chain is on the extracellular side. The region spanning 198-390 (RIVEIVVVID…RTKCLLETVH (193 aa)) is the Peptidase M12B domain. 2 N-linked (GlcNAc...) asparagine glycosylation sites follow: Asn217 and Asn320. Intrachain disulfides connect Cys307–Cys384, Cys347–Cys369, and Cys349–Cys354. N-linked (GlcNAc...) asparagine glycans are attached at residues Asn368, Asn428, Asn469, Asn538, Asn545, Asn558, and Asn564. The 87-residue stretch at 397-483 (VKRCGNGVVE…KCPDDFYVED (87 aa)) folds into the Disintegrin domain. An intrachain disulfide couples Cys455 to Cys475. Disulfide bonds link Cys625-Cys636, Cys630-Cys642, and Cys644-Cys653. The region spanning 625-654 (CSPAFCNKRGICNNKHHCHCNYLWDPPNCL) is the EGF-like domain. Residues 675–695 (KFCYLCILLLIVLFILLCCLY) form a helical membrane-spanning segment. Residues 696–820 (RLCKKSKPIK…SQSQPPVTPS (125 aa)) lie on the Cytoplasmic side of the membrane. The interval 706 to 820 (KQQDVQTPSA…SQSQPPVTPS (115 aa)) is disordered. The span at 715–727 (AKEEEKIQRRPHE) shows a compositional bias: basic and acidic residues. The span at 738 to 820 (PSQSQPPVTP…SQSQPPVTPS (83 aa)) shows a compositional bias: low complexity. Repeat copies occupy residues 739 to 747 (SQSQPPVTP), 748 to 756 (SQSHPQVMP), 757 to 765 (SQSQPPVTP), 766 to 774 (SQSQPRVMP), 775 to 783 (SQSQPPVMP), 784 to 792 (SQSHPQLTP), 793 to 801 (SQSQPPVTP), 802 to 810 (SQRQPQLMP), and 811 to 819 (SQSQPPVTP). The 9 X 9 AA approximate repeats stretch occupies residues 739 to 819 (SQSQPPVTPS…PSQSQPPVTP (81 aa)).

In terms of tissue distribution, expressed specifically in testes.

The protein localises to the membrane. May be involved in spermatogenesis and fertilization. Seems to be a non catalytic metalloprotease-like protein. The protein is Disintegrin and metalloproteinase domain-containing protein 29 (ADAM29) of Homo sapiens (Human).